The sequence spans 610 residues: Butyryl-CoA dehydrogenase Swol_2052 (610 aa).

The Proton acceptor role is filled by Glu-451.

It belongs to the acyl-CoA dehydrogenase family. FAD is required as a cofactor.

The protein localises to the cytoplasm. It carries out the reaction butanoyl-CoA + oxidized [electron-transfer flavoprotein] + H(+) = (2E)-butenoyl-CoA + reduced [electron-transfer flavoprotein]. It catalyses the reaction a short-chain 2,3-saturated fatty acyl-CoA + oxidized [electron-transfer flavoprotein] + H(+) = a short-chain (2E)-enoyl-CoA + reduced [electron-transfer flavoprotein]. It participates in lipid metabolism; butanoate metabolism. Involved in syntrophic growth of S.wolfei with butyrate, as part of the butyrate oxidation pathway. Catalyzes the oxidation of butanoyl-CoA to crotonyl-CoA. Probably passes the electrons released by this reaction on to electron-transfer flavoproteins (EtfAB) to finally generate hydrogen and/or formate. This Syntrophomonas wolfei subsp. wolfei (strain DSM 2245B / Goettingen) protein is Butyryl-CoA dehydrogenase Swol_2052.